We begin with the raw amino-acid sequence, 348 residues long: Dihydroorotase (348 aa).

2 residues coordinate Zn(2+): H17 and H19. Residues 19–21 and N45 contribute to the substrate site; that span reads HLR. Residues K103, H140, and H178 each coordinate Zn(2+). The residue at position 103 (K103) is an N6-carboxylysine. H140 is a binding site for substrate. L223 contacts substrate. D251 is a binding site for Zn(2+). D251 is a catalytic residue. The substrate site is built by H255 and A267.

Belongs to the metallo-dependent hydrolases superfamily. DHOase family. Class II DHOase subfamily. Homodimer. Zn(2+) serves as cofactor.

It catalyses the reaction (S)-dihydroorotate + H2O = N-carbamoyl-L-aspartate + H(+). Its pathway is pyrimidine metabolism; UMP biosynthesis via de novo pathway; (S)-dihydroorotate from bicarbonate: step 3/3. Its function is as follows. Catalyzes the reversible cyclization of carbamoyl aspartate to dihydroorotate. The sequence is that of Dihydroorotase from Shigella flexneri.